Here is a 348-residue protein sequence, read N- to C-terminus: NADH-ubiquinone oxidoreductase chain 2 (348 aa).

10 helical membrane-spanning segments follow: residues 1–21, 25–45, 60–80, 93–115, 149–169, 177–197, 200–220, 239–259, 274–294, and 326–346; these read MSPY…TITF, SWLM…PLMV, FLTQ…NAWM, LSAP…HFWL, LNTT…GLGG, KVLA…IQYS, LALL…LTLM, IATM…PLTG, NLPA…FFYL, and LAML…MVAI.

The protein belongs to the complex I subunit 2 family.

The protein localises to the mitochondrion inner membrane. The catalysed reaction is a ubiquinone + NADH + 5 H(+)(in) = a ubiquinol + NAD(+) + 4 H(+)(out). Core subunit of the mitochondrial membrane respiratory chain NADH dehydrogenase (Complex I) that is believed to belong to the minimal assembly required for catalysis. Complex I functions in the transfer of electrons from NADH to the respiratory chain. The immediate electron acceptor for the enzyme is believed to be ubiquinone. In Latimeria chalumnae (Coelacanth), this protein is NADH-ubiquinone oxidoreductase chain 2 (MT-ND2).